A 128-amino-acid polypeptide reads, in one-letter code: Probable 4-amino-4-deoxy-L-arabinose-phosphoundecaprenol flippase subunit ArnF (128 aa).

Residues 1–21 (MGLMWGLFSVIIASAAQLSLG) traverse the membrane as a helical segment. Residues 22–35 (YAASHLPPMTQFWD) lie on the Periplasmic side of the membrane. Residues 36–56 (FIAAFFAFGPGARMLVVGLVG) form a helical membrane-spanning segment. Over 57–76 (YLLSVFCWYKALHQLALSKA) the chain is Cytoplasmic. A helical membrane pass occupies residues 77–97 (YALLSMSYVLVWIASMVLPGW). The Periplasmic segment spans residues 98–100 (EGT). A helical transmembrane segment spans residues 101 to 121 (FSLKALLGVACIMSGLMLIFL). Residues 122-128 (PTTKQRY) are Cytoplasmic-facing.

It belongs to the ArnF family. As to quaternary structure, heterodimer of ArnE and ArnF.

The protein localises to the cell inner membrane. Its pathway is bacterial outer membrane biogenesis; lipopolysaccharide biosynthesis. In terms of biological role, translocates 4-amino-4-deoxy-L-arabinose-phosphoundecaprenol (alpha-L-Ara4N-phosphoundecaprenol) from the cytoplasmic to the periplasmic side of the inner membrane. The protein is Probable 4-amino-4-deoxy-L-arabinose-phosphoundecaprenol flippase subunit ArnF of Escherichia fergusonii (strain ATCC 35469 / DSM 13698 / CCUG 18766 / IAM 14443 / JCM 21226 / LMG 7866 / NBRC 102419 / NCTC 12128 / CDC 0568-73).